Here is a 341-residue protein sequence, read N- to C-terminus: Tubulin-specific chaperone C (341 aa).

An N-acetylmethionine modification is found at Met-1. The segment covering 34–49 has biased composition (basic and acidic residues); sequence ERQIEVERRKQKRQDQ. A disordered region spans residues 34–55; sequence ERQIEVERRKQKRQDQEVEEEK. Ser-79 carries the post-translational modification Phosphoserine. A disordered region spans residues 148-173; that stretch reads TAQVDAAPVTSAAPSPPVTKEEEGAP. The 156-residue stretch at 163–318 folds into the C-CAP/cofactor C-like domain; it reads PPVTKEEEGA…NWDQVDDFNW (156 aa).

It belongs to the TBCC family. As to quaternary structure, supercomplex made of cofactors A to E. Cofactors A and D function by capturing and stabilizing tubulin in a quasi-native conformation. Cofactor E binds to the cofactor D-tubulin complex; interaction with cofactor C then causes the release of tubulin polypeptides that are committed to the native state.

It is found in the cytoplasm. Functionally, tubulin-folding protein; involved in the final step of the tubulin folding pathway. The protein is Tubulin-specific chaperone C (Tbcc) of Mus musculus (Mouse).